The chain runs to 252 residues: Chitooligosaccharide deacetylase (252 aa).

Mg(2+) contacts are provided by histidine 61 and histidine 125.

This sequence belongs to the YdjC deacetylase family. ChbG subfamily. In terms of assembly, homodimer. Mg(2+) is required as a cofactor.

The protein localises to the cytoplasm. The enzyme catalyses N,N'-diacetylchitobiose + H2O = N-acetyl-beta-D-glucosaminyl-(1-&gt;4)-D-glucosamine + acetate. It catalyses the reaction diacetylchitobiose-6'-phosphate + H2O = N'-monoacetylchitobiose-6'-phosphate + acetate. It functions in the pathway glycan degradation; chitin degradation. Functionally, involved in the degradation of chitin. ChbG is essential for growth on the acetylated chitooligosaccharides chitobiose and chitotriose but is dispensable for growth on cellobiose and chitosan dimer, the deacetylated form of chitobiose. Deacetylation of chitobiose-6-P and chitotriose-6-P is necessary for both the activation of the chb promoter by the regulatory protein ChbR and the hydrolysis of phosphorylated beta-glucosides by the phospho-beta-glucosidase ChbF. Catalyzes the removal of only one acetyl group from chitobiose-6-P to yield monoacetylchitobiose-6-P, the inducer of ChbR and the substrate of ChbF. The chain is Chitooligosaccharide deacetylase from Enterobacter sp. (strain 638).